A 377-amino-acid chain; its full sequence is Gastricsin (377 aa).

Residues 1–5 (QLLEA) form the signal peptide. Propeptides (activation peptide) lie at residues 6–31 (AVVK…LGEF) and 32–48 (LRTH…FGDL). A Peptidase A1 domain is found at 62 to 374 (YFGEISIGTP…DLSNNRVGFA (313 aa)). The active site involves aspartate 80. 2 disulfide bridges follow: cysteine 93–cysteine 98 and cysteine 256–cysteine 260. The active site involves aspartate 265. A disulfide bridge links cysteine 299 with cysteine 332.

The protein belongs to the peptidase A1 family. In terms of processing, each pepsinogen is converted to corresponding pepsin at pH 2.0 in part as a result of the release of a 47 AA activation segment and in part as a result of stepwise proteolytic cleavage via an intermediate form(s).

It localises to the secreted. The enzyme catalyses More restricted specificity than pepsin A, but shows preferential cleavage at Tyr-|-Xaa bonds. High activity on hemoglobin.. Its function is as follows. Hydrolyzes a variety of proteins. The protein is Gastricsin (PGC) of Macaca fuscata fuscata (Japanese macaque).